The sequence spans 633 residues: Glutamyl-tRNA(Gln) amidotransferase subunit E (633 aa).

Residues 415-437 (LDDGTTKFLRPQPGSARMYPETD) form a disordered region.

This sequence belongs to the GatB/GatE family. GatE subfamily. Heterodimer of GatD and GatE.

It catalyses the reaction L-glutamyl-tRNA(Gln) + L-glutamine + ATP + H2O = L-glutaminyl-tRNA(Gln) + L-glutamate + ADP + phosphate + H(+). Allows the formation of correctly charged Gln-tRNA(Gln) through the transamidation of misacylated Glu-tRNA(Gln) in organisms which lack glutaminyl-tRNA synthetase. The reaction takes place in the presence of glutamine and ATP through an activated gamma-phospho-Glu-tRNA(Gln). The GatDE system is specific for glutamate and does not act on aspartate. The protein is Glutamyl-tRNA(Gln) amidotransferase subunit E of Saccharolobus solfataricus (strain ATCC 35092 / DSM 1617 / JCM 11322 / P2) (Sulfolobus solfataricus).